We begin with the raw amino-acid sequence, 74 residues long: Heat shock factor-binding protein 1-like protein 1 (74 aa).

Positions 12-65 (RALRDAAENLFQELQEHFQALTATLNLRMEEMGNRIEDLQKNVKDLMVQAGIEN) form a coiled coil.

It belongs to the HSBP1 family.

This is Heat shock factor-binding protein 1-like protein 1 (HSBP1L1) from Homo sapiens (Human).